Consider the following 247-residue polypeptide: MRILVSNDDGYFAPGIAALAAALGELGDVTVVAPERDRSGASNSLTLDRPLSLRRAANGFFFVNGTPTDCVHLAVTGMLDQLPDMVVSGVNHGANMGDDTLYSGTVAAATEGYLLGIPSIAVSLASWSATDFSVAAQVARDVAARLMRSPLPAPVLLNVNVPDCAGGAPKGTRVTRLGKRHKAEPVIRSQTPRGETVYWVGAAGAAADAGEGTDFHAVANGFVSVTPLQVDLTHTGQIAAVDTWLSA.

A divalent metal cation contacts are provided by aspartate 8, aspartate 9, serine 39, and asparagine 91.

The protein belongs to the SurE nucleotidase family. Requires a divalent metal cation as cofactor.

Its subcellular location is the cytoplasm. It carries out the reaction a ribonucleoside 5'-phosphate + H2O = a ribonucleoside + phosphate. Functionally, nucleotidase that shows phosphatase activity on nucleoside 5'-monophosphates. This is 5'-nucleotidase SurE from Azoarcus sp. (strain BH72).